The chain runs to 480 residues: Aromatic-L-amino-acid decarboxylase (480 aa).

Met1 is modified (N-acetylmethionine). 2 consecutive repeat copies span residues 58–115 (RDIE…TELE) and 118–178 (MMDW…TQAA). Residues 58–178 (RDIEKIIMPG…AASPELTQAA (121 aa)) form a 2 X approximate tandem repeats region. Residue Thr82 coordinates substrate. 2 residues coordinate pyridoxal 5'-phosphate: Ala148 and Ser149. His192 is a substrate binding site. The pyridoxal 5'-phosphate site is built by Thr246 and Asn300. Lys303 carries the N6-(pyridoxal phosphate)lysine modification.

The protein belongs to the group II decarboxylase family. Homodimer. Requires pyridoxal 5'-phosphate as cofactor.

It catalyses the reaction L-dopa + H(+) = dopamine + CO2. The enzyme catalyses 5-hydroxy-L-tryptophan + H(+) = serotonin + CO2. Its pathway is catecholamine biosynthesis; dopamine biosynthesis; dopamine from L-tyrosine: step 2/2. Catalyzes the decarboxylation of L-3,4-dihydroxyphenylalanine (DOPA) to dopamine and L-5-hydroxytryptophan to serotonin. This Rattus norvegicus (Rat) protein is Aromatic-L-amino-acid decarboxylase.